Reading from the N-terminus, the 443-residue chain is Omega-6 fatty acid desaturase, chloroplastic (443 aa).

The transit peptide at M1–A64 directs the protein to the chloroplast. Residues H166–H170 carry the Histidine box-1 motif. The Histidine box-2 motif lies at H202 to H206. The Histidine box-3 motif lies at H362–H366.

It belongs to the fatty acid desaturase type 1 family.

It is found in the plastid. It localises to the chloroplast membrane. It catalyses the reaction a (9Z)-octadecenoyl-containing glycerolipid + 2 reduced [2Fe-2S]-[ferredoxin] + O2 + 2 H(+) = a (9Z,12Z)-octadecadienoyl-containing glycerolipid + 2 oxidized [2Fe-2S]-[ferredoxin] + 2 H2O. The protein operates within lipid metabolism; polyunsaturated fatty acid biosynthesis. Its function is as follows. Chloroplast omega-6 fatty acid desaturase introduces the second double bond in the biosynthesis of 16:3 and 18:3 fatty acids, important constituents of plant membranes. It is thought to use ferredoxin as an electron donor and to act on fatty acids esterified to galactolipids, sulfolipids and phosphatidylglycerol. The chain is Omega-6 fatty acid desaturase, chloroplastic from Brassica napus (Rape).